We begin with the raw amino-acid sequence, 228 residues long: Cytochrome c oxidase subunit 2 (228 aa).

Over 1 to 26 the chain is Mitochondrial intermembrane; the sequence is MSTWANLGLQDSASPLMEQLIFFHDH. Residues 27–48 form a helical membrane-spanning segment; the sequence is ALLILVMITVLVGYLMFMLFFN. The Mitochondrial matrix portion of the chain corresponds to 49–62; that stretch reads NYVNRFLLHGQLIE. The chain crosses the membrane as a helical span at residues 63-82; it reads MIWTILPAIILLFIALPSLR. The Mitochondrial intermembrane segment spans residues 83-228; the sequence is LLYLLDEINE…FIKWISSNNS (146 aa). Cu cation-binding residues include His161, Cys196, Glu198, Cys200, His204, and Met207. Glu198 is a binding site for Mg(2+).

This sequence belongs to the cytochrome c oxidase subunit 2 family. As to quaternary structure, component of the cytochrome c oxidase (complex IV, CIV), a multisubunit enzyme composed of a catalytic core of 3 subunits and several supernumerary subunits. The complex exists as a monomer or a dimer and forms supercomplexes (SCs) in the inner mitochondrial membrane with ubiquinol-cytochrome c oxidoreductase (cytochrome b-c1 complex, complex III, CIII). Cu cation serves as cofactor.

Its subcellular location is the mitochondrion inner membrane. It catalyses the reaction 4 Fe(II)-[cytochrome c] + O2 + 8 H(+)(in) = 4 Fe(III)-[cytochrome c] + 2 H2O + 4 H(+)(out). Component of the cytochrome c oxidase, the last enzyme in the mitochondrial electron transport chain which drives oxidative phosphorylation. The respiratory chain contains 3 multisubunit complexes succinate dehydrogenase (complex II, CII), ubiquinol-cytochrome c oxidoreductase (cytochrome b-c1 complex, complex III, CIII) and cytochrome c oxidase (complex IV, CIV), that cooperate to transfer electrons derived from NADH and succinate to molecular oxygen, creating an electrochemical gradient over the inner membrane that drives transmembrane transport and the ATP synthase. Cytochrome c oxidase is the component of the respiratory chain that catalyzes the reduction of oxygen to water. Electrons originating from reduced cytochrome c in the intermembrane space (IMS) are transferred via the dinuclear copper A center (CU(A)) of subunit 2 and heme A of subunit 1 to the active site in subunit 1, a binuclear center (BNC) formed by heme A3 and copper B (CU(B)). The BNC reduces molecular oxygen to 2 water molecules using 4 electrons from cytochrome c in the IMS and 4 protons from the mitochondrial matrix. This is Cytochrome c oxidase subunit 2 (mt:CoII) from Drosophila yakuba (Fruit fly).